Consider the following 346-residue polypeptide: Methylthioribose-1-phosphate isomerase (346 aa).

Substrate is bound by residues 45-47 (RGA), R87, and Q194. Catalysis depends on D235, which acts as the Proton donor. Substrate is bound at residue 245-246 (NK).

This sequence belongs to the eIF-2B alpha/beta/delta subunits family. MtnA subfamily.

The catalysed reaction is 5-(methylsulfanyl)-alpha-D-ribose 1-phosphate = 5-(methylsulfanyl)-D-ribulose 1-phosphate. The protein operates within amino-acid biosynthesis; L-methionine biosynthesis via salvage pathway; L-methionine from S-methyl-5-thio-alpha-D-ribose 1-phosphate: step 1/6. Functionally, catalyzes the interconversion of methylthioribose-1-phosphate (MTR-1-P) into methylthioribulose-1-phosphate (MTRu-1-P). The sequence is that of Methylthioribose-1-phosphate isomerase from Syntrophomonas wolfei subsp. wolfei (strain DSM 2245B / Goettingen).